We begin with the raw amino-acid sequence, 1155 residues long: RHO1 GDP-GTP exchange protein 1 (1155 aa).

N-acetylmethionine is present on methionine 1. A compositionally biased stretch (polar residues) spans 100–143; sequence NSSPQSFTGDQISPTNKKISINDSTRQDKGNSCTTTSSPSQKRS. The interval 100 to 249 is disordered; the sequence is NSSPQSFTGD…HSRSKSSPVS (150 aa). Serine 154 and serine 155 each carry phosphoserine. The segment covering 155–167 has biased composition (low complexity); it reads SPSLLSFSKNSGS. Phosphothreonine is present on threonine 180. A compositionally biased stretch (low complexity) spans 190–227; it reads LHSSFNGKHSSSSTSSLFALESLKTQNRRSSNSSNHSS. The span at 228 to 243 shows a compositional bias: basic residues; the sequence is QYRRHTNQHQRHHSRS. Serine 433 is modified (phosphoserine). The 188-residue stretch at 464 to 651 folds into the DH domain; the sequence is KRQEAIYELF…KDLMKRIDRA (188 aa). Residues 842-1137 enclose the CNH domain; sequence TNRVNDVLIC…RMLKSYAKKI (296 aa).

In terms of biological role, stimulates the exchange of RHO1 GDP-bound form into GTP-bound form. The polypeptide is RHO1 GDP-GTP exchange protein 1 (ROM1) (Saccharomyces cerevisiae (strain ATCC 204508 / S288c) (Baker's yeast)).